The chain runs to 222 residues: Cytidylate kinase (222 aa).

Gly11–Thr19 lines the ATP pocket.

This sequence belongs to the cytidylate kinase family. Type 1 subfamily.

It is found in the cytoplasm. It catalyses the reaction CMP + ATP = CDP + ADP. It carries out the reaction dCMP + ATP = dCDP + ADP. The protein is Cytidylate kinase of Cupriavidus necator (strain ATCC 17699 / DSM 428 / KCTC 22496 / NCIMB 10442 / H16 / Stanier 337) (Ralstonia eutropha).